The chain runs to 358 residues: Methionine aminopeptidase 2 (358 aa).

His109 serves as a coordination point for substrate. Positions 130, 141, and 210 each coordinate a divalent metal cation. Residue His218 coordinates substrate. A divalent metal cation is bound by residues Glu243 and Glu339.

It belongs to the peptidase M24A family. Methionine aminopeptidase eukaryotic type 2 subfamily. It depends on Co(2+) as a cofactor. Requires Zn(2+) as cofactor. The cofactor is Mn(2+). Fe(2+) is required as a cofactor.

The protein localises to the cytoplasm. The enzyme catalyses Release of N-terminal amino acids, preferentially methionine, from peptides and arylamides.. Cotranslationally removes the N-terminal methionine from nascent proteins. The N-terminal methionine is often cleaved when the second residue in the primary sequence is small and uncharged (Met-Ala-, Cys, Gly, Pro, Ser, Thr, or Val). The chain is Methionine aminopeptidase 2 from Encephalitozoon cuniculi (strain GB-M1) (Microsporidian parasite).